Consider the following 339-residue polypeptide: Biotin synthase (339 aa).

In terms of domain architecture, Radical SAM core spans asparagine 53–arginine 271. Residues cysteine 68, cysteine 72, and cysteine 75 each contribute to the [4Fe-4S] cluster site. Positions 112, 143, 203, and 275 each coordinate [2Fe-2S] cluster.

The protein belongs to the radical SAM superfamily. Biotin synthase family. In terms of assembly, homodimer. Requires [4Fe-4S] cluster as cofactor. It depends on [2Fe-2S] cluster as a cofactor.

The enzyme catalyses (4R,5S)-dethiobiotin + (sulfur carrier)-SH + 2 reduced [2Fe-2S]-[ferredoxin] + 2 S-adenosyl-L-methionine = (sulfur carrier)-H + biotin + 2 5'-deoxyadenosine + 2 L-methionine + 2 oxidized [2Fe-2S]-[ferredoxin]. It participates in cofactor biosynthesis; biotin biosynthesis; biotin from 7,8-diaminononanoate: step 2/2. Catalyzes the conversion of dethiobiotin (DTB) to biotin by the insertion of a sulfur atom into dethiobiotin via a radical-based mechanism. The sequence is that of Biotin synthase from Agrobacterium fabrum (strain C58 / ATCC 33970) (Agrobacterium tumefaciens (strain C58)).